Consider the following 432-residue polypeptide: Alpha-galactosidase (432 aa).

2–68 (KKITFIGAGS…PSVAINSYDD (67 aa)) is a binding site for NAD(+). A substrate-binding site is contributed by asparagine 148. Residue cysteine 169 coordinates Mn(2+). The active-site Proton donor is histidine 170. Histidine 199 lines the Mn(2+) pocket.

The protein belongs to the glycosyl hydrolase 4 family. Homodimer. Mn(2+) is required as a cofactor. It depends on NAD(+) as a cofactor.

The protein localises to the cytoplasm. The enzyme catalyses Hydrolysis of terminal, non-reducing alpha-D-galactose residues in alpha-D-galactosides, including galactose oligosaccharides, galactomannans and galactolipids.. Catalyzes the hydrolysis of melibiose and alpha-galactosides of the raffinose family of oligosaccharides (RFOs) such as raffinose and stachyose. Cannot act on polymeric substrates such as locust bean gum. The polypeptide is Alpha-galactosidase (Bacillus subtilis (strain 168)).